Consider the following 235-residue polypeptide: Ion-translocating oxidoreductase complex subunit E (235 aa).

5 helical membrane-spanning segments follow: residues 63 to 83 (LGLS…ISLF), 93 to 113 (IPIY…LMNA), 117 to 137 (TLYQ…IIIG), 152 to 172 (IWDG…LGAL), and 206 to 226 (SFLL…LLAI).

It belongs to the NqrDE/RnfAE family. The complex is composed of six subunits: RnfA, RnfB, RnfC, RnfD, RnfE and RnfG.

The protein resides in the cell inner membrane. In terms of biological role, part of a membrane-bound complex that couples electron transfer with translocation of ions across the membrane. This chain is Ion-translocating oxidoreductase complex subunit E, found in Haemophilus influenzae (strain PittEE).